The sequence spans 247 residues: PF03932 family protein CutC (247 aa).

Belongs to the CutC family.

Its subcellular location is the cytoplasm. The chain is PF03932 family protein CutC from Chromobacterium violaceum (strain ATCC 12472 / DSM 30191 / JCM 1249 / CCUG 213 / NBRC 12614 / NCIMB 9131 / NCTC 9757 / MK).